Reading from the N-terminus, the 930-residue chain is Isoleucine--tRNA ligase (930 aa).

The 'HIGH' region motif lies at 57–67 (PYANGHLHLGH). Glu-555 lines the L-isoleucyl-5'-AMP pocket. Positions 596-600 (KMSKS) match the 'KMSKS' region motif. Lys-599 contacts ATP. Positions 896, 899, 916, and 919 each coordinate Zn(2+).

This sequence belongs to the class-I aminoacyl-tRNA synthetase family. IleS type 1 subfamily. Monomer. Zn(2+) is required as a cofactor.

Its subcellular location is the cytoplasm. The catalysed reaction is tRNA(Ile) + L-isoleucine + ATP = L-isoleucyl-tRNA(Ile) + AMP + diphosphate. Its function is as follows. Catalyzes the attachment of isoleucine to tRNA(Ile). As IleRS can inadvertently accommodate and process structurally similar amino acids such as valine, to avoid such errors it has two additional distinct tRNA(Ile)-dependent editing activities. One activity is designated as 'pretransfer' editing and involves the hydrolysis of activated Val-AMP. The other activity is designated 'posttransfer' editing and involves deacylation of mischarged Val-tRNA(Ile). This is Isoleucine--tRNA ligase from Moorella thermoacetica (strain ATCC 39073 / JCM 9320).